The following is a 228-amino-acid chain: Large ribosomal subunit protein bL25 (228 aa).

Residues 196–228 (EEAAVAEAQSAESAEGKAEAEAEATNEKNKSEA) are disordered. Positions 209 to 228 (AEGKAEAEAEATNEKNKSEA) are enriched in basic and acidic residues.

The protein belongs to the bacterial ribosomal protein bL25 family. CTC subfamily. As to quaternary structure, part of the 50S ribosomal subunit; part of the 5S rRNA/L5/L18/L25 subcomplex. Contacts the 5S rRNA. Binds to the 5S rRNA independently of L5 and L18.

Functionally, this is one of the proteins that binds to the 5S RNA in the ribosome where it forms part of the central protuberance. This chain is Large ribosomal subunit protein bL25, found in Methylorubrum extorquens (strain CM4 / NCIMB 13688) (Methylobacterium extorquens).